We begin with the raw amino-acid sequence, 299 residues long: Peroxisomal biogenesis factor 19 (299 aa).

Residues 1-61 (MAAAEEGCGV…KRAPGDTAKD (61 aa)) form a disordered region. The residue at position 2 (Ala-2) is an N-acetylalanine. Residues 2–56 (AAAEEGCGVGVEDDRELEELLESALDDFDKAKPSPEHAPTISAPDASGPQKRAPG) form a docking to the peroxisome membrane and binding to PEX3 region. A necessary for PEX19 function on peroxisome biogenesis region spans residues 2 to 91 (AAAEEGCGVG…QATAEFEKAM (90 aa)). Residues 12–27 (VEDDRELEELLESALD) show a composition bias toward acidic residues. 2 positions are modified to phosphoserine: Ser-35 and Ser-66. Thr-236 is modified (phosphothreonine). Cysteine methyl ester is present on Cys-296. Cys-296 is lipidated: S-farnesyl cysteine. Residues 297–299 (LIM) constitute a propeptide, removed in mature form.

Belongs to the peroxin-19 family. Interacts with a broad range of peroxisomal membrane proteins, including PEX3, PEX10, PEX11A, PEX11B, PEX12, PEX13, PEX14 and PEX16, PXMP2/PMP22, PXMP4/PMP24, SLC25A17/PMP34, ABCD1/ALDP, ABCD2/ALDRP, and ABCD3/PMP70. Also interacts with the tumor suppressor CDKN2A/p19ARF.

The protein resides in the cytoplasm. Its subcellular location is the peroxisome membrane. Its function is as follows. Necessary for early peroxisomal biogenesis. Acts both as a cytosolic chaperone and as an import receptor for peroxisomal membrane proteins (PMPs). Binds and stabilizes newly synthesized PMPs in the cytoplasm by interacting with their hydrophobic membrane-spanning domains, and targets them to the peroxisome membrane by binding to the integral membrane protein PEX3. Excludes CDKN2A from the nucleus and prevents its interaction with MDM2, which results in active degradation of TP53. The polypeptide is Peroxisomal biogenesis factor 19 (Pex19) (Mus musculus (Mouse)).